The primary structure comprises 327 residues: Phenylalanine--tRNA ligase alpha subunit (327 aa).

Position 252 (glutamate 252) interacts with Mg(2+).

It belongs to the class-II aminoacyl-tRNA synthetase family. Phe-tRNA synthetase alpha subunit type 1 subfamily. As to quaternary structure, tetramer of two alpha and two beta subunits. The cofactor is Mg(2+).

Its subcellular location is the cytoplasm. It catalyses the reaction tRNA(Phe) + L-phenylalanine + ATP = L-phenylalanyl-tRNA(Phe) + AMP + diphosphate + H(+). This Shewanella baltica (strain OS223) protein is Phenylalanine--tRNA ligase alpha subunit.